Reading from the N-terminus, the 374-residue chain is tRNA-specific 2-thiouridylase MnmA (374 aa).

ATP is bound by residues 12 to 19 (GMSGGVDS) and Met38. The interaction with target base in tRNA stretch occupies residues 98–100 (NPD). Cys103 serves as the catalytic Nucleophile. Cys103 and Cys202 form a disulfide bridge. Gly128 is an ATP binding site. The segment at 152–154 (KDQ) is interaction with tRNA. Cys202 (cysteine persulfide intermediate) is an active-site residue. The segment at 316 to 317 (RY) is interaction with tRNA.

Belongs to the MnmA/TRMU family.

It localises to the cytoplasm. It carries out the reaction S-sulfanyl-L-cysteinyl-[protein] + uridine(34) in tRNA + AH2 + ATP = 2-thiouridine(34) in tRNA + L-cysteinyl-[protein] + A + AMP + diphosphate + H(+). Its function is as follows. Catalyzes the 2-thiolation of uridine at the wobble position (U34) of tRNA, leading to the formation of s(2)U34. This chain is tRNA-specific 2-thiouridylase MnmA, found in Vibrio vulnificus (strain YJ016).